Reading from the N-terminus, the 189-residue chain is UPF0301 protein A1E_00140 (189 aa).

The protein belongs to the UPF0301 (AlgH) family.

The sequence is that of UPF0301 protein A1E_00140 from Rickettsia canadensis (strain McKiel).